The sequence spans 453 residues: O-methyltransferase bik3 (453 aa).

The disordered stretch occupies residues M1–N25. Over residues N8–N25 the composition is skewed to low complexity. Residue D305 participates in S-adenosyl-L-methionine binding. H355 serves as the catalytic Proton acceptor.

This sequence belongs to the class I-like SAM-binding methyltransferase superfamily. Cation-independent O-methyltransferase family. COMT subfamily.

It functions in the pathway secondary metabolite biosynthesis. O-methyltransferase; part of the gene cluster that mediates the biosynthesis of bikaverin, a red pigment also considered as a mycotoxin. The first stage is catalyzed by the polyketide synthase bik1, which catalyzes the formation of the intermediate SMA76a also knowm as pre-bikaverin. FAD-dependent monooxygenase bik2 might then be responsible for the oxidation of pre-bikaverin to oxo-pre-bikaverin which is in turn methylated by the O-methyltransferase bik3 to me-oxo-pre-bikaverin. A further cycle of oxydation and methylation by bik2 and bik3 leads to the final product of bikaverin, via a nor-bikaverin intermediate. The sequence is that of O-methyltransferase bik3 from Gibberella fujikuroi (strain CBS 195.34 / IMI 58289 / NRRL A-6831) (Bakanae and foot rot disease fungus).